The following is a 203-amino-acid chain: Holliday junction branch migration complex subunit RuvA (203 aa).

The segment at 1–64 (MIGRLRGIIL…EDAQLLYGFN (64 aa)) is domain I. Residues 65–142 (NKQERTLFKE…KGLHGDLFTP (78 aa)) are domain II. The interval 143 to 154 (AVDLVLTSPASP) is flexible linker. The interval 155–203 (TSEDAEQEAVAALVALGYKPQEASRMVSKIARPDASSETLIRDALRAAL) is domain III.

Belongs to the RuvA family. As to quaternary structure, homotetramer. Forms an RuvA(8)-RuvB(12)-Holliday junction (HJ) complex. HJ DNA is sandwiched between 2 RuvA tetramers; dsDNA enters through RuvA and exits via RuvB. An RuvB hexamer assembles on each DNA strand where it exits the tetramer. Each RuvB hexamer is contacted by two RuvA subunits (via domain III) on 2 adjacent RuvB subunits; this complex drives branch migration. In the full resolvosome a probable DNA-RuvA(4)-RuvB(12)-RuvC(2) complex forms which resolves the HJ.

Its subcellular location is the cytoplasm. In terms of biological role, the RuvA-RuvB-RuvC complex processes Holliday junction (HJ) DNA during genetic recombination and DNA repair, while the RuvA-RuvB complex plays an important role in the rescue of blocked DNA replication forks via replication fork reversal (RFR). RuvA specifically binds to HJ cruciform DNA, conferring on it an open structure. The RuvB hexamer acts as an ATP-dependent pump, pulling dsDNA into and through the RuvAB complex. HJ branch migration allows RuvC to scan DNA until it finds its consensus sequence, where it cleaves and resolves the cruciform DNA. In Salmonella agona (strain SL483), this protein is Holliday junction branch migration complex subunit RuvA.